Here is a 223-residue protein sequence, read N- to C-terminus: 3,4-dihydroxy-2-butanone 4-phosphate synthase (223 aa).

D-ribulose 5-phosphate contacts are provided by residues 39–40 (RE), D44, 152–156 (RRGHT), and E176. E40 provides a ligand contact to Mg(2+). H155 is a Mg(2+) binding site.

This sequence belongs to the DHBP synthase family. In terms of assembly, homodimer. Mg(2+) serves as cofactor. The cofactor is Mn(2+).

The catalysed reaction is D-ribulose 5-phosphate = (2S)-2-hydroxy-3-oxobutyl phosphate + formate + H(+). It participates in cofactor biosynthesis; riboflavin biosynthesis; 2-hydroxy-3-oxobutyl phosphate from D-ribulose 5-phosphate: step 1/1. In terms of biological role, catalyzes the conversion of D-ribulose 5-phosphate to formate and 3,4-dihydroxy-2-butanone 4-phosphate. The protein is 3,4-dihydroxy-2-butanone 4-phosphate synthase of Desulfovibrio desulfuricans (strain ATCC 27774 / DSM 6949 / MB).